A 612-amino-acid chain; its full sequence is Sulfite reductase [NADPH] hemoprotein beta-component (612 aa).

Residues 1–32 (MDDHKPIDTPDGPAVDTPGIGAHRYEAPPTDR) are disordered. [4Fe-4S] cluster contacts are provided by Cys469, Cys475, Cys514, and Cys518. Cys518 contacts siroheme.

This sequence belongs to the nitrite and sulfite reductase 4Fe-4S domain family. Alpha(8)-beta(8). The alpha component is a flavoprotein, the beta component is a hemoprotein. Requires siroheme as cofactor. [4Fe-4S] cluster serves as cofactor.

The catalysed reaction is hydrogen sulfide + 3 NADP(+) + 3 H2O = sulfite + 3 NADPH + 4 H(+). It participates in sulfur metabolism; hydrogen sulfide biosynthesis; hydrogen sulfide from sulfite (NADPH route): step 1/1. Its function is as follows. Component of the sulfite reductase complex that catalyzes the 6-electron reduction of sulfite to sulfide. This is one of several activities required for the biosynthesis of L-cysteine from sulfate. This is Sulfite reductase [NADPH] hemoprotein beta-component from Methylorubrum populi (strain ATCC BAA-705 / NCIMB 13946 / BJ001) (Methylobacterium populi).